A 351-amino-acid chain; its full sequence is Heat-inducible transcription repressor HrcA (351 aa).

Belongs to the HrcA family.

In terms of biological role, negative regulator of class I heat shock genes (grpE-dnaK-dnaJ and groELS operons). Prevents heat-shock induction of these operons. This Fusobacterium nucleatum subsp. nucleatum (strain ATCC 25586 / DSM 15643 / BCRC 10681 / CIP 101130 / JCM 8532 / KCTC 2640 / LMG 13131 / VPI 4355) protein is Heat-inducible transcription repressor HrcA.